Reading from the N-terminus, the 642-residue chain is Threonine--tRNA ligase (642 aa).

In terms of domain architecture, TGS spans 1-61; sequence MPIITLPDGS…TADSELAIIT (61 aa). The catalytic stretch occupies residues 243-534; sequence DHRKIGKQLD…LIEEYAGKFP (292 aa). 3 residues coordinate Zn(2+): cysteine 334, histidine 385, and histidine 511.

Belongs to the class-II aminoacyl-tRNA synthetase family. In terms of assembly, homodimer. The cofactor is Zn(2+).

It is found in the cytoplasm. It catalyses the reaction tRNA(Thr) + L-threonine + ATP = L-threonyl-tRNA(Thr) + AMP + diphosphate + H(+). Functionally, catalyzes the attachment of threonine to tRNA(Thr) in a two-step reaction: L-threonine is first activated by ATP to form Thr-AMP and then transferred to the acceptor end of tRNA(Thr). Also edits incorrectly charged L-seryl-tRNA(Thr). This chain is Threonine--tRNA ligase, found in Shewanella frigidimarina (strain NCIMB 400).